We begin with the raw amino-acid sequence, 457 residues long: Hepatocyte nuclear factor 3-beta (457 aa).

Residues 14-93 (DWSSYYAEPE…AGAMAGMGGS (80 aa)) form a transactivation domain 1 region. Residues 106 to 113 (LSPSLSPL) carry the Nuclear localization signal motif. Phosphothreonine is present on threonine 156. Positions 159-252 (KPPYSYISLI…FENGCYLRRQ (94 aa)) form a DNA-binding region, fork-head. Residues serine 212 and serine 283 each carry the phosphoserine modification. Low complexity predominate over residues 280 to 292 (AQASQAQLGEAAG). Residues 280–365 (AQASQAQLGE…PGLPPEAHLK (86 aa)) form a disordered region. Polar residues predominate over residues 298–310 (PAGTESPHSSASP). Threonine 301 carries the post-translational modification Phosphothreonine. A phosphoserine mark is found at serine 303, serine 306, serine 307, and serine 309. The span at 339 to 352 (PGQQQQAAAHLLGP) shows a compositional bias: low complexity. The segment at 361–457 (EAHLKPEHHY…VYSRPIMNSS (97 aa)) is transactivation domain 2. 2 positions are modified to phosphoserine: serine 436 and serine 457.

In terms of assembly, binds DNA as a monomer. Binds TLE1. Interacts with FOXA1 and FOXA3. Interacts with PRKDC. Interacts with AKT1. Interacts with TET1; this interaction may recruit TET1 to specific genomic loci to mediate their demethylation. Post-translationally, phosphorylation on Thr-156 abolishes binding to target promoters and subsequent transcription activation upon insulin stimulation.

The protein localises to the nucleus. Its subcellular location is the cytoplasm. Its function is as follows. Transcription factor that is involved in embryonic development, establishment of tissue-specific gene expression and regulation of gene expression in differentiated tissues. Is thought to act as a 'pioneer' factor opening the compacted chromatin for other proteins through interactions with nucleosomal core histones and thereby replacing linker histones at target enhancer and/or promoter sites. Binds DNA with the consensus sequence 5'-[AC]A[AT]T[AG]TT[GT][AG][CT]T[CT]-3'. In embryonic development is required for notochord formation. Involved in the development of multiple endoderm-derived organ systems such as the liver, pancreas and lungs; FOXA1 and FOXA2 seem to have at least in part redundant roles. Originally described as a transcription activator for a number of liver genes such as AFP, albumin, tyrosine aminotransferase, PEPCK, etc. Interacts with the cis-acting regulatory regions of these genes. Involved in glucose homeostasis; regulates the expression of genes important for glucose sensing in pancreatic beta-cells and glucose homeostasis. Involved in regulation of fat metabolism. Binds to fibrinogen beta promoter and is involved in IL6-induced fibrinogen beta transcriptional activation. The protein is Hepatocyte nuclear factor 3-beta (FOXA2) of Homo sapiens (Human).